The primary structure comprises 397 residues: Tryptophan synthase beta chain (397 aa).

Residue lysine 87 is modified to N6-(pyridoxal phosphate)lysine.

This sequence belongs to the TrpB family. In terms of assembly, tetramer of two alpha and two beta chains. Requires pyridoxal 5'-phosphate as cofactor.

The enzyme catalyses (1S,2R)-1-C-(indol-3-yl)glycerol 3-phosphate + L-serine = D-glyceraldehyde 3-phosphate + L-tryptophan + H2O. The protein operates within amino-acid biosynthesis; L-tryptophan biosynthesis; L-tryptophan from chorismate: step 5/5. The beta subunit is responsible for the synthesis of L-tryptophan from indole and L-serine. This Salmonella agona (strain SL483) protein is Tryptophan synthase beta chain.